Reading from the N-terminus, the 485-residue chain is Anthranilate synthase component I-like protein (485 aa).

Residues serine 69 and 271–273 each bind L-tryptophan; that span reads PFA. 306 to 307 serves as a coordination point for chorismate; the sequence is GT. Glutamate 333 is a Mg(2+) binding site. Chorismate contacts are provided by residues arginine 441, 455 to 457, and glycine 457; that span reads GAG. Glutamate 470 contributes to the Mg(2+) binding site.

It belongs to the anthranilate synthase component I family. In terms of assembly, tetramer of two components I and two components II. Mg(2+) serves as cofactor.

The catalysed reaction is chorismate + L-glutamine = anthranilate + pyruvate + L-glutamate + H(+). Its pathway is amino-acid biosynthesis; L-tryptophan biosynthesis; L-tryptophan from chorismate: step 1/5. The protein is Anthranilate synthase component I-like protein (trpE2) of Synechocystis sp. (strain ATCC 27184 / PCC 6803 / Kazusa).